Reading from the N-terminus, the 145-residue chain is D-aminoacyl-tRNA deacylase (145 aa).

The Gly-cisPro motif, important for rejection of L-amino acids motif lies at 137 to 138 (GP).

The protein belongs to the DTD family. Homodimer.

The protein localises to the cytoplasm. It carries out the reaction glycyl-tRNA(Ala) + H2O = tRNA(Ala) + glycine + H(+). The catalysed reaction is a D-aminoacyl-tRNA + H2O = a tRNA + a D-alpha-amino acid + H(+). Functionally, an aminoacyl-tRNA editing enzyme that deacylates mischarged D-aminoacyl-tRNAs. Also deacylates mischarged glycyl-tRNA(Ala), protecting cells against glycine mischarging by AlaRS. Acts via tRNA-based rather than protein-based catalysis; rejects L-amino acids rather than detecting D-amino acids in the active site. By recycling D-aminoacyl-tRNA to D-amino acids and free tRNA molecules, this enzyme counteracts the toxicity associated with the formation of D-aminoacyl-tRNA entities in vivo and helps enforce protein L-homochirality. The sequence is that of D-aminoacyl-tRNA deacylase from Shewanella sp. (strain ANA-3).